Here is a 155-residue protein sequence, read N- to C-terminus: Small ribosomal subunit protein uS7 (155 aa).

Belongs to the universal ribosomal protein uS7 family. In terms of assembly, part of the 30S ribosomal subunit. Contacts proteins S9 and S11.

Its function is as follows. One of the primary rRNA binding proteins, it binds directly to 16S rRNA where it nucleates assembly of the head domain of the 30S subunit. Is located at the subunit interface close to the decoding center, probably blocks exit of the E-site tRNA. In Chlorobium chlorochromatii (strain CaD3), this protein is Small ribosomal subunit protein uS7.